Consider the following 294-residue polypeptide: Probable enoyl-CoA hydratase echA12 (294 aa).

The protein belongs to the enoyl-CoA hydratase/isomerase family.

It catalyses the reaction a (3S)-3-hydroxyacyl-CoA = a (2E)-enoyl-CoA + H2O. The enzyme catalyses a 4-saturated-(3S)-3-hydroxyacyl-CoA = a (3E)-enoyl-CoA + H2O. In terms of biological role, could possibly oxidize fatty acids using specific components. The protein is Probable enoyl-CoA hydratase echA12 (echA12) of Mycobacterium leprae (strain TN).